A 288-amino-acid chain; its full sequence is Acetyl-coenzyme A carboxylase carboxyl transferase subunit beta (288 aa).

A CoA carboxyltransferase N-terminal domain is found at 34-288 (LFAKCPACKH…HLVAFHGGVS (255 aa)). Positions 38, 41, 56, and 59 each coordinate Zn(2+). Residues 38 to 59 (CPACKHMIYQKDLGPAKICPTC) form a C4-type zinc finger.

The protein belongs to the AccD/PCCB family. Acetyl-CoA carboxylase is a heterohexamer composed of biotin carboxyl carrier protein (AccB), biotin carboxylase (AccC) and two subunits each of ACCase subunit alpha (AccA) and ACCase subunit beta (AccD). It depends on Zn(2+) as a cofactor.

Its subcellular location is the cytoplasm. It carries out the reaction N(6)-carboxybiotinyl-L-lysyl-[protein] + acetyl-CoA = N(6)-biotinyl-L-lysyl-[protein] + malonyl-CoA. It functions in the pathway lipid metabolism; malonyl-CoA biosynthesis; malonyl-CoA from acetyl-CoA: step 1/1. In terms of biological role, component of the acetyl coenzyme A carboxylase (ACC) complex. Biotin carboxylase (BC) catalyzes the carboxylation of biotin on its carrier protein (BCCP) and then the CO(2) group is transferred by the transcarboxylase to acetyl-CoA to form malonyl-CoA. In Streptococcus equi subsp. zooepidemicus (strain H70), this protein is Acetyl-coenzyme A carboxylase carboxyl transferase subunit beta.